The chain runs to 221 residues: Jacalin-related lectin 47 (221 aa).

Jacalin-type lectin domains are found at residues 1 to 64 and 71 to 217; these read MDSN…YYYP and SEKL…HVLP.

It belongs to the jacalin lectin family.

The polypeptide is Jacalin-related lectin 47 (JAL47) (Arabidopsis thaliana (Mouse-ear cress)).